Here is a 225-residue protein sequence, read N- to C-terminus: NAD(P)H-quinone oxidoreductase subunit K, chloroplastic (225 aa).

4 residues coordinate [4Fe-4S] cluster: cysteine 43, cysteine 44, cysteine 108, and cysteine 139.

The protein belongs to the complex I 20 kDa subunit family. As to quaternary structure, NDH is composed of at least 16 different subunits, 5 of which are encoded in the nucleus. The cofactor is [4Fe-4S] cluster.

The protein resides in the plastid. Its subcellular location is the chloroplast thylakoid membrane. The catalysed reaction is a plastoquinone + NADH + (n+1) H(+)(in) = a plastoquinol + NAD(+) + n H(+)(out). It catalyses the reaction a plastoquinone + NADPH + (n+1) H(+)(in) = a plastoquinol + NADP(+) + n H(+)(out). Functionally, NDH shuttles electrons from NAD(P)H:plastoquinone, via FMN and iron-sulfur (Fe-S) centers, to quinones in the photosynthetic chain and possibly in a chloroplast respiratory chain. The immediate electron acceptor for the enzyme in this species is believed to be plastoquinone. Couples the redox reaction to proton translocation, and thus conserves the redox energy in a proton gradient. The sequence is that of NAD(P)H-quinone oxidoreductase subunit K, chloroplastic from Solanum bulbocastanum (Wild potato).